The chain runs to 56 residues: uncharacterized protein (56 aa).

The interval 15-56 (SIGNISSGNINNSIGNSSSSGCDDVFNNSTNNNNNNNNNNNK) is disordered.

This is an uncharacterized protein from Dictyostelium discoideum (Social amoeba).